Here is a 113-residue protein sequence, read N- to C-terminus: T cell receptor alpha variable 8-4 (113 aa).

Residues 1–20 (MLLLLVPVLEVIFTLGGTRA) form the signal peptide. Residues 21–113 (QSVTQLGSHV…DAAEYFCAVS (93 aa)) form the Ig-like domain. Cys-42 and Cys-110 are joined by a disulfide. Asn-43 carries N-linked (GlcNAc...) asparagine glycosylation.

Alpha-beta TR is a heterodimer composed of an alpha and beta chain; disulfide-linked. The alpha-beta TR is associated with the transmembrane signaling CD3 coreceptor proteins to form the TR-CD3 (TcR or TCR). The assembly of alpha-beta TR heterodimers with CD3 occurs in the endoplasmic reticulum where a single alpha-beta TR heterodimer associates with one CD3D-CD3E heterodimer, one CD3G-CD3E heterodimer and one CD247 homodimer forming a stable octameric structure. CD3D-CD3E and CD3G-CD3E heterodimers preferentially associate with TR alpha and TR beta chains, respectively. The association of the CD247 homodimer is the last step of TcR assembly in the endoplasmic reticulum and is required for transport to the cell surface.

Its subcellular location is the cell membrane. Functionally, v region of the variable domain of T cell receptor (TR) alpha chain that participates in the antigen recognition. Alpha-beta T cell receptors are antigen specific receptors which are essential to the immune response and are present on the cell surface of T lymphocytes. Recognize peptide-major histocompatibility (MH) (pMH) complexes that are displayed by antigen presenting cells (APC), a prerequisite for efficient T cell adaptive immunity against pathogens. Binding of alpha-beta TR to pMH complex initiates TR-CD3 clustering on the cell surface and intracellular activation of LCK that phosphorylates the ITAM motifs of CD3G, CD3D, CD3E and CD247 enabling the recruitment of ZAP70. In turn ZAP70 phosphorylates LAT, which recruits numerous signaling molecules to form the LAT signalosome. The LAT signalosome propagates signal branching to three major signaling pathways, the calcium, the mitogen-activated protein kinase (MAPK) kinase and the nuclear factor-kappa-B (NF-kB) pathways, leading to the mobilization of transcription factors that are critical for gene expression and essential for T cell growth and differentiation. The T cell repertoire is generated in the thymus, by V-(D)-J rearrangement. This repertoire is then shaped by intrathymic selection events to generate a peripheral T cell pool of self-MH restricted, non-autoaggressive T cells. Post-thymic interaction of alpha-beta TR with the pMH complexes shapes TR structural and functional avidity. This is T cell receptor alpha variable 8-4 from Homo sapiens (Human).